The primary structure comprises 182 residues: Functional amyloid subunit FapB (182 aa).

The signal sequence occupies residues 1–18; that stretch reads MTHSWLLLTVLGCSAAMA. One copy of the FapB_R1 repeat lies at 22–58; that stretch reads NQALIDNAGKQYTGVLSVNQAAGNQHQQINSRAISLG. Residues 80–114 form a FapB_R2 repeat; that stretch reads SAAIQGSAFSNGNGILGVNQSAGANNQMINAVRIS. A FapB_R3 repeat occupies 150–180; the sequence is SDQAFTGSRGVVQVNQSAGVGNRMANTLGVT.

It belongs to the FapB/FapC family. In terms of assembly, forms fibrils in vitro; in the presence of FapA the fibrils are slightly narrower. A minor component of purified amyloid fibrils. Fibrils are resistant to boiling in 2% (weight/vol) SDS and require &gt;90% (vol/vol) formic acid to dissolve.

The protein localises to the fimbrium. The protein resides in the secreted. Its function is as follows. A minor component of the functional amyloid in this bacterium. Probably nucleates fibril formation; FapB nucleates fibrillation its own, FapA inhibits FapB fibril elongation. Upon overexpression of the endogenous six-gene locus (fapA-fapF) in situ, cells form large clumps during liquid growth, make large amounts of biofilm and produce amyloid fibrils. Expression of the 6 gene operon in E.coli strain BL21(DE3) induces flocculation and biofilm formation with copious extracellular fibrils. This chain is Functional amyloid subunit FapB, found in Pseudomonas fluorescens.